The primary structure comprises 463 residues: Argininosuccinate lyase (463 aa).

This sequence belongs to the lyase 1 family. Argininosuccinate lyase subfamily.

It is found in the cytoplasm. It carries out the reaction 2-(N(omega)-L-arginino)succinate = fumarate + L-arginine. It functions in the pathway amino-acid biosynthesis; L-arginine biosynthesis; L-arginine from L-ornithine and carbamoyl phosphate: step 3/3. The chain is Argininosuccinate lyase from Methylorubrum extorquens (strain CM4 / NCIMB 13688) (Methylobacterium extorquens).